The chain runs to 878 residues: Alanine--tRNA ligase (878 aa).

Residues His567, His571, Cys669, and His673 each coordinate Zn(2+).

The protein belongs to the class-II aminoacyl-tRNA synthetase family. Requires Zn(2+) as cofactor.

The protein resides in the cytoplasm. It catalyses the reaction tRNA(Ala) + L-alanine + ATP = L-alanyl-tRNA(Ala) + AMP + diphosphate. Catalyzes the attachment of alanine to tRNA(Ala) in a two-step reaction: alanine is first activated by ATP to form Ala-AMP and then transferred to the acceptor end of tRNA(Ala). Also edits incorrectly charged Ser-tRNA(Ala) and Gly-tRNA(Ala) via its editing domain. This Rickettsia felis (strain ATCC VR-1525 / URRWXCal2) (Rickettsia azadi) protein is Alanine--tRNA ligase.